A 364-amino-acid polypeptide reads, in one-letter code: MRWLVCLIVSWCSLVPLGATVGQSLNSGDPCQTPSGTAGTCEPVKNCSYVRKILKSPDFSHYDTTYLDTLKCGDLMVPMRKKPIPLLCCPKFSNSPTCGAQQLADRIYFGEETERGAHPWAALLFYNVGRNRTVPKCGGALISERYVITAAHCTVDKPNWKLLYVRFNEFNTSSADNCTTENDEVICREDYAVESIVPHPEYDMHNISRPNDICILRLASDVTFNDYVRPICLPFDPDVQQLPIVDEIFTVTGWGETEDRRPSDTQKHVELPGLEHEACNSVYAVANVTLSDKQLCIGGLNGSDSCRGDSGGPLMREVRGGWFLIGVVSFGARFCGTQNLPGVYTNVAKYLDWMETVMFVERYL.

Positions 1–19 (MRWLVCLIVSWCSLVPLGA) are cleaved as a signal peptide. Positions 30-89 (PCQTPSGTAGTCEPVKNCSYVRKILKSPDFSHYDTTYLDTLKCGDLMVPMRKKPIPLLCC) constitute a Clip domain. 3 cysteine pairs are disulfide-bonded: cysteine 31-cysteine 88, cysteine 41-cysteine 72, and cysteine 47-cysteine 89. N-linked (GlcNAc...) asparagine glycosylation occurs at asparagine 46. The region spanning 107–359 (IYFGEETERG…YLDWMETVMF (253 aa)) is the Peptidase S1 domain. Asparagine 131 carries an N-linked (GlcNAc...) asparagine glycan. The cysteines at positions 137 and 153 are disulfide-linked. Histidine 152 serves as the catalytic Charge relay system. 3 N-linked (GlcNAc...) asparagine glycosylation sites follow: asparagine 171, asparagine 177, and asparagine 206. The active-site Charge relay system is aspartate 212. Cysteine 279 and cysteine 296 form a disulfide bridge. Asparagine 287 and asparagine 301 each carry an N-linked (GlcNAc...) asparagine glycan. A disulfide bridge connects residues cysteine 306 and cysteine 335. The active-site Charge relay system is serine 310.

It belongs to the peptidase S1 family. CLIP subfamily. N-glycosylated. In terms of processing, proteolytically cleaved. As to expression, expressed by a subpopulation of hemocytes.

The protein localises to the secreted. Its function is as follows. Serine protease. Plays a role in innate immunity against infections by parasite P.berghei and by Gram-negative bacteria such as E.coli. In response to P.berghei infection, contributes to the clearing of parasite ookinetes independent of melanization, an innate immune response which consists in the deposition of melanin pigments on invading pathogens and parasites. The protein is CLIP domain-containing serine protease B15 of Anopheles gambiae (African malaria mosquito).